The sequence spans 154 residues: 6,7-dimethyl-8-ribityllumazine synthase (154 aa).

5-amino-6-(D-ribitylamino)uracil contacts are provided by residues F26, 60-62 (ALE), and 84-86 (CII). Residue 89–90 (QT) participates in (2S)-2-hydroxy-3-oxobutyl phosphate binding. Catalysis depends on H92, which acts as the Proton donor. Residue N117 participates in 5-amino-6-(D-ribitylamino)uracil binding. (2S)-2-hydroxy-3-oxobutyl phosphate is bound at residue R131.

This sequence belongs to the DMRL synthase family.

The enzyme catalyses (2S)-2-hydroxy-3-oxobutyl phosphate + 5-amino-6-(D-ribitylamino)uracil = 6,7-dimethyl-8-(1-D-ribityl)lumazine + phosphate + 2 H2O + H(+). It functions in the pathway cofactor biosynthesis; riboflavin biosynthesis; riboflavin from 2-hydroxy-3-oxobutyl phosphate and 5-amino-6-(D-ribitylamino)uracil: step 1/2. Functionally, catalyzes the formation of 6,7-dimethyl-8-ribityllumazine by condensation of 5-amino-6-(D-ribitylamino)uracil with 3,4-dihydroxy-2-butanone 4-phosphate. This is the penultimate step in the biosynthesis of riboflavin. This is 6,7-dimethyl-8-ribityllumazine synthase from Verminephrobacter eiseniae (strain EF01-2).